The chain runs to 209 residues: Urease accessory protein UreG (209 aa).

18 to 25 contacts GTP; it reads GPVGSGKT.

Belongs to the SIMIBI class G3E GTPase family. UreG subfamily. In terms of assembly, homodimer. UreD, UreF and UreG form a complex that acts as a GTP-hydrolysis-dependent molecular chaperone, activating the urease apoprotein by helping to assemble the nickel containing metallocenter of UreC. The UreE protein probably delivers the nickel.

It localises to the cytoplasm. Its function is as follows. Facilitates the functional incorporation of the urease nickel metallocenter. This process requires GTP hydrolysis, probably effectuated by UreG. The chain is Urease accessory protein UreG from Cupriavidus necator (strain ATCC 17699 / DSM 428 / KCTC 22496 / NCIMB 10442 / H16 / Stanier 337) (Ralstonia eutropha).